The sequence spans 215 residues: Cytochrome b6 (215 aa).

The helical transmembrane segment at 32–52 (IFYCLGGITLTCFLVQVATGF) threads the bilayer. Cys35 is a heme c binding site. Heme b contacts are provided by His86 and His100. Helical transmembrane passes span 90–110 (ASMM…TGGF), 116–136 (LTWV…VTGY), and 186–206 (LHTF…FLMI). Heme b is bound by residues His187 and His202.

The protein belongs to the cytochrome b family. PetB subfamily. As to quaternary structure, the 4 large subunits of the cytochrome b6-f complex are cytochrome b6, subunit IV (17 kDa polypeptide, PetD), cytochrome f and the Rieske protein, while the 4 small subunits are PetG, PetL, PetM and PetN. The complex functions as a dimer. It depends on heme b as a cofactor. The cofactor is heme c.

The protein localises to the plastid. It localises to the chloroplast thylakoid membrane. Component of the cytochrome b6-f complex, which mediates electron transfer between photosystem II (PSII) and photosystem I (PSI), cyclic electron flow around PSI, and state transitions. The sequence is that of Cytochrome b6 from Oenothera elata subsp. hookeri (Hooker's evening primrose).